Consider the following 416-residue polypeptide: Serine/threonine-protein kinase 26 (416 aa).

Alanine 2 carries the post-translational modification N-acetylalanine. Serine 4 bears the Phosphoserine mark. The Protein kinase domain occupies 24–274 (FTKLERIGKG…AKELLKHKFI (251 aa)). ATP-binding positions include 30–38 (IGKGSFGEV) and lysine 53. Aspartate 144 functions as the Proton acceptor in the catalytic mechanism. Threonine 178 is modified (phosphothreonine; by autocatalysis). Residues 297–340 (EGHSDDESDSEGSDSESTSRENNTHPEWSFTTVRKKPDPKKVQN) form a disordered region. Residues serine 300, serine 304, serine 306, serine 309, and serine 325 each carry the phosphoserine modification. Phosphothreonine is present on residues threonine 327 and threonine 328.

The protein belongs to the protein kinase superfamily. STE Ser/Thr protein kinase family. STE20 subfamily. In terms of assembly, homodimer. Interacts with PDCD10. Interacts with GOLGA2. Interacts with CTTNBP2NL. Interacts with RIPOR1 (via C-terminus); this interaction occurs in a PDCD10-dependent and Rho-independent manner. Interacts with PDCD10; this interaction is required for the association of STK26 with RIPOR1. Part of the core of STRIPAK complexes composed of PP2A catalytic and scaffolding subunits, the striatins (PP2A regulatory subunits), the striatin-associated proteins MOB4, STRIP1 and STRIP2, PDCD10 and members of the STE20 kinases, such as STK24 and STK26. It depends on Mg(2+) as a cofactor.

Its subcellular location is the cytoplasm. It localises to the golgi apparatus. It carries out the reaction L-seryl-[protein] + ATP = O-phospho-L-seryl-[protein] + ADP + H(+). The catalysed reaction is L-threonyl-[protein] + ATP = O-phospho-L-threonyl-[protein] + ADP + H(+). Interaction with Golgi matrix protein GOLGA2 leads to autophosphorylation on Thr-178, possibly as a consequence of stabilization of dimer formation. May also be activated by C-terminal cleavage. Its function is as follows. Serine/threonine-protein kinase that acts as a mediator of cell growth. Modulates apoptosis. In association with STK24 negatively regulates Golgi reorientation in polarized cell migration upon RHO activation. Phosphorylates ATG4B at 'Ser-383', thereby increasing autophagic flux. Part of the striatin-interacting phosphatase and kinase (STRIPAK) complexes. STRIPAK complexes have critical roles in protein (de)phosphorylation and are regulators of multiple signaling pathways including Hippo, MAPK, nuclear receptor and cytoskeleton remodeling. Different types of STRIPAK complexes are involved in a variety of biological processes such as cell growth, differentiation, apoptosis, metabolism and immune regulation. The chain is Serine/threonine-protein kinase 26 from Homo sapiens (Human).